Here is a 174-residue protein sequence, read N- to C-terminus: Ferredoxin-thioredoxin reductase, variable chain, chloroplastic (174 aa).

The transit peptide at 1-62 (MTTGVAVMSS…RTRARLAICC (62 aa)) directs the protein to the chloroplast. Residues 69 to 81 (DSSTGFDSSSSSP) show a composition bias toward low complexity. A disordered region spans residues 69–89 (DSSTGFDSSSSSPPEEDEELK). 2 positions are modified to phosphoserine: Ser-70 and Ser-71.

The protein belongs to the ferredoxin thioredoxin reductase alpha subunit family. In terms of assembly, heterodimer of subunit A (variable subunit) and subunit B (catalytic subunit). Heterodimeric FTR forms a complex with ferredoxin and thioredoxin.

Its subcellular location is the plastid. The protein resides in the chloroplast. Its function is as follows. Variable subunit of the ferredoxin-thioredoxin reductase (FTR), which catalyzes the two-electron reduction of thioredoxins by the electrons provided by reduced ferredoxin. This is Ferredoxin-thioredoxin reductase, variable chain, chloroplastic (FTRV) from Spinacia oleracea (Spinach).